A 139-amino-acid chain; its full sequence is Protein GOS9 (139 aa).

Positions 5–139 (LVKIGTWGGN…VDSIGVYVHI (135 aa)) constitute a Jacalin-type lectin domain.

Expressed mainly in roots.

This is Protein GOS9 (GOS9) from Oryza sativa subsp. indica (Rice).